Reading from the N-terminus, the 321-residue chain is MKRWKDRRTGLLLPLVLLLFGACSSLAWVCGRRMSSRSQQLNNASAIVEGKPASAIVGGKPANILEFPWHVGIMNHGSHLCGGSILNEWWVLSASHCFDQLNNSKLEIIHGTEDLSTKGIKYQKVDKLFLHPKFDDWLLDNDIALLLLKSPLNLSVNRIPICTSEISDIQAWRNCWVTGWGITNTSEKGVQPTILQAVKVDLYRWDWCGYILSLLTKNMLCAGTQDPGKDACQGDSGGALVCNKKRNTAIWYQVGIVSWGMGCGKKNLPGVYTKVSHYVRWISKQTAKAGRPYMYEQNSACPLVLSCRAILFLYFVMFLLT.

A signal peptide spans 1–27 (MKRWKDRRTGLLLPLVLLLFGACSSLA). The Peptidase S1 domain maps to 56-287 (IVGGKPANIL…YVRWISKQTA (232 aa)). Residues cysteine 81 and cysteine 97 are joined by a disulfide bond. Catalysis depends on charge relay system residues histidine 96 and aspartate 142. The N-linked (GlcNAc...) asparagine glycan is linked to asparagine 153. 3 disulfide bridges follow: cysteine 175–cysteine 242, cysteine 208–cysteine 221, and cysteine 232–cysteine 263. Residue serine 236 is the Charge relay system of the active site. Residues 300–320 (ACPLVLSCRAILFLYFVMFLL) traverse the membrane as a helical segment.

The protein belongs to the peptidase S1 family.

It localises to the membrane. Functionally, probable serine protease. This is Serine protease 52 (Prss52) from Mus musculus (Mouse).